The sequence spans 78 residues: Mambalgin-1 (78 aa).

The signal sequence occupies residues 1–21 (MKTLLLTLLVVTIVCLDLGYS). Cystine bridges form between C24-C40, C33-C58, C62-C70, and C71-C76.

Belongs to the three-finger toxin family. Short-chain subfamily. Mambalgin sub-subfamily. In terms of tissue distribution, expressed by the venom gland.

The protein localises to the secreted. In terms of biological role, this three-finger toxin inhibits ASIC channels. It acts as a gating modifier toxin by decreasing the apparent proton sensitivity of activation and by slightly increasing the apparent proton sensitivity for inactivation. It binds more tightly to the closed state and to a much lesser extent the inactivated/desensitized state of ASIC1a isoform of ASIC1. It interacts directly with the outside surface of the thumb domain of chicken ASIC1a (ASIC1a), but does not insert into the acidic pocket as suggested for mambalgin-2. This binding leads to relocation of the thumb domain that could disrupt the acidic pocket of cASIC1a. It reversibly inhibits rat ASIC1a (IC(50)=3.4-55 nM), rat ASIC1a-ASIC2b (IC(50)=61 nM), rat ASIC1a-ASIC1b (IC(50)=72 nM), human ASIC1a (IC(50)=127-580 nM), chicken ASIC1a (IC(50)=123.6 nM), rat ASIC1b (IC(50)=22.2-203 nM), rat ASIC1a-ASIC2a (IC(50)=152-252 nM). In vivo, it shows a potent naloxone-resistant analgesic effect against acute and inflammatory pain upon central and peripheral injection. In addition, it also has an opioid-independent effect on both thermal and mechanical inflammatory pain after systemic administration and is effective against neuropathic pain. The polypeptide is Mambalgin-1 (Dendroaspis polylepis polylepis (Black mamba)).